The sequence spans 183 residues: Bifunctional protein PyrR (183 aa).

Substrate contacts are provided by residues 42–43 (TR), Arg-87, 104–112 (DDVLYTGRT), Arg-137, and Val-161. The PRPP-binding motif lies at 100-112 (VILVDDVLYTGRT).

It belongs to the purine/pyrimidine phosphoribosyltransferase family. PyrR subfamily.

The enzyme catalyses UMP + diphosphate = 5-phospho-alpha-D-ribose 1-diphosphate + uracil. In terms of biological role, regulates the transcription of the pyrimidine nucleotide (pyr) operon in response to exogenous pyrimidines. Also displays a weak uracil phosphoribosyltransferase activity which is not physiologically significant. The polypeptide is Bifunctional protein PyrR (Deinococcus radiodurans (strain ATCC 13939 / DSM 20539 / JCM 16871 / CCUG 27074 / LMG 4051 / NBRC 15346 / NCIMB 9279 / VKM B-1422 / R1)).